We begin with the raw amino-acid sequence, 304 residues long: MSAKSKGNPSSSCPAEGPPAASKTKVKEQIKIIVEDLELVLGDLKDVAKELKEVVDQIDTLTSDLQLEDEMTDSSKTDTLNSSSSGTTASSLEKIKVQANAPLIKPPAHPSAILTVLRKPNPPPPPPRLTPVKCEDPKRVVPTANPVKTNGTLLRNGGLPGGPNKIPNGDICCIPNSNLDKAPVQLLMHRPEKDRCPQAGPRERVRFNEKVQYHGYCPDCDTRYNIKNREVHLHSEPVHPPGKIPHQGPPLPPTPHLPPFPLENGGMGISHSNSFPPIRPATVPPPTAPKPQKTILRKSTTTTV.

Over residues 1–13 the composition is skewed to polar residues; sequence MSAKSKGNPSSSC. 4 disordered regions span residues 1–27, 66–91, 114–160, and 239–304; these read MSAK…TKVK, QLED…TASS, LTVL…GGLP, and HPPG…TTTV. Residues 33–70 adopt a coiled-coil conformation; it reads IVEDLELVLGDLKDVAKELKEVVDQIDTLTSDLQLEDE. Residues 77–91 are compositionally biased toward low complexity; that stretch reads TDTLNSSSSGTTASS. 3 stretches are compositionally biased toward pro residues: residues 120–129, 239–261, and 277–289; these read PNPPPPPPRL, HPPG…PPFP, and PIRP…PTAP.

Its function is as follows. Regulator of cell size that promotes cell size increase independently of mTOR and Hippo signaling pathways. Acts by stimulating the translation of specific mRNAs, including those encoding proteins affecting mitochondrial functions. Increases mitochondrial mass and respiration. This is Protein Largen (PRR16) from Homo sapiens (Human).